We begin with the raw amino-acid sequence, 1217 residues long: CST complex subunit CTC1 (1217 aa).

The interval 327–346 (LEADPKPLPTPSNSEDKKDP) is disordered.

It belongs to the CTC1 family. Component of the CST complex, composed of TEN1/C17orf106, CTC1/C17orf68 and STN1; in the complex interacts directly with STN1. Interacts with ACD and POT1.

It is found in the nucleus. The protein resides in the chromosome. Its subcellular location is the telomere. Component of the CST complex proposed to act as a specialized replication factor promoting DNA replication under conditions of replication stress or natural replication barriers such as the telomere duplex. The CST complex binds single-stranded DNA with high affinity in a sequence-independent manner, while isolated subunits bind DNA with low affinity by themselves. Initially the CST complex has been proposed to protect telomeres from DNA degradation. However, the CST complex has been shown to be involved in several aspects of telomere replication. The CST complex inhibits telomerase and is involved in telomere length homeostasis; it is proposed to bind to newly telomerase-synthesized 3' overhangs and to terminate telomerase action implicating the association with the ACD:POT1 complex thus interfering with its telomerase stimulation activity. The CST complex is also proposed to be involved in fill-in synthesis of the telomeric C-strand probably implicating recruitment and activation of DNA polymerase alpha. The CST complex facilitates recovery from many forms of exogenous DNA damage; seems to be involved in the re-initiation of DNA replication at repaired forks and/or dormant origins. Involved in telomere maintenance. Involved in genome stability. May be in involved in telomeric C-strand fill-in during late S/G2 phase. The chain is CST complex subunit CTC1 (CTC1) from Pongo abelii (Sumatran orangutan).